The sequence spans 214 residues: Putative AgrB-like protein (214 aa).

Helical transmembrane passes span 41-61 (IISVFIIGLLFNIALEALIFL), 82-102 (CTLLGIIISICIGFLVKSSFF), 109-129 (IIVFIGIVIFVFGYFIVFKFA), 154-174 (ILTIYLFIEILSIILYYNLGW), and 182-202 (LSIILGVAWQCITLTYIGNIL).

This sequence belongs to the AgrB family.

The protein resides in the cell membrane. Functionally, may be involved in the proteolytic processing of a quorum sensing system signal molecule precursor. The polypeptide is Putative AgrB-like protein (Clostridium perfringens (strain SM101 / Type A)).